Here is a 423-residue protein sequence, read N- to C-terminus: Glucose-1-phosphate adenylyltransferase (423 aa).

Alpha-D-glucose 1-phosphate-binding positions include Tyr-108, Gly-173, 188 to 189 (EK), and Ser-207.

This sequence belongs to the bacterial/plant glucose-1-phosphate adenylyltransferase family. As to quaternary structure, homotetramer.

It carries out the reaction alpha-D-glucose 1-phosphate + ATP + H(+) = ADP-alpha-D-glucose + diphosphate. The protein operates within glycan biosynthesis; glycogen biosynthesis. Functionally, involved in the biosynthesis of ADP-glucose, a building block required for the elongation reactions to produce glycogen. Catalyzes the reaction between ATP and alpha-D-glucose 1-phosphate (G1P) to produce pyrophosphate and ADP-Glc. The chain is Glucose-1-phosphate adenylyltransferase from Francisella tularensis subsp. tularensis (strain WY96-3418).